The chain runs to 337 residues: Phenylalanine--tRNA ligase alpha subunit (337 aa).

A Mg(2+)-binding site is contributed by Glu258.

Belongs to the class-II aminoacyl-tRNA synthetase family. Phe-tRNA synthetase alpha subunit type 1 subfamily. Tetramer of two alpha and two beta subunits. Mg(2+) serves as cofactor.

Its subcellular location is the cytoplasm. It carries out the reaction tRNA(Phe) + L-phenylalanine + ATP = L-phenylalanyl-tRNA(Phe) + AMP + diphosphate + H(+). In Burkholderia mallei (strain ATCC 23344), this protein is Phenylalanine--tRNA ligase alpha subunit.